Here is a 700-residue protein sequence, read N- to C-terminus: Elongation factor G 1 (700 aa).

In terms of domain architecture, tr-type G spans 8 to 290 (ERYRNIGISA…AVIEYLPSPI (283 aa)). GTP is bound by residues 17-24 (AHIDAGKT), 88-92 (DTPGH), and 142-145 (NKMD).

It belongs to the TRAFAC class translation factor GTPase superfamily. Classic translation factor GTPase family. EF-G/EF-2 subfamily.

The protein localises to the cytoplasm. In terms of biological role, catalyzes the GTP-dependent ribosomal translocation step during translation elongation. During this step, the ribosome changes from the pre-translocational (PRE) to the post-translocational (POST) state as the newly formed A-site-bound peptidyl-tRNA and P-site-bound deacylated tRNA move to the P and E sites, respectively. Catalyzes the coordinated movement of the two tRNA molecules, the mRNA and conformational changes in the ribosome. In Bordetella avium (strain 197N), this protein is Elongation factor G 1.